The primary structure comprises 283 residues: 4-diphosphocytidyl-2-C-methyl-D-erythritol kinase (283 aa).

Residue K10 is part of the active site. 99 to 109 (PMGGGLGGGSS) lines the ATP pocket. D141 is a catalytic residue.

Belongs to the GHMP kinase family. IspE subfamily. Homodimer.

It carries out the reaction 4-CDP-2-C-methyl-D-erythritol + ATP = 4-CDP-2-C-methyl-D-erythritol 2-phosphate + ADP + H(+). Its pathway is isoprenoid biosynthesis; isopentenyl diphosphate biosynthesis via DXP pathway; isopentenyl diphosphate from 1-deoxy-D-xylulose 5-phosphate: step 3/6. Catalyzes the phosphorylation of the position 2 hydroxy group of 4-diphosphocytidyl-2C-methyl-D-erythritol. The polypeptide is 4-diphosphocytidyl-2-C-methyl-D-erythritol kinase (Salmonella enteritidis PT4 (strain P125109)).